The following is a 278-amino-acid chain: Serine/arginine-rich splicing factor SR34B (278 aa).

The 76-residue stretch at Arg7–Gly82 folds into the RRM 1 domain. The segment covering His81 to Arg91 has biased composition (basic and acidic residues). 2 disordered regions span residues His81 to Arg121 and Glu192 to Ser263. The segment covering Ser95–Gly107 has biased composition (gly residues). Composition is skewed to basic and acidic residues over residues Gly108–Tyr120 and Glu192–Ser201. One can recognise an RRM 2 domain in the interval Tyr120–Ser195. 9 positions are modified to phosphoserine: Ser201, Ser203, Ser225, Ser231, Ser233, Ser242, Ser250, Ser259, and Ser263. The span at Ser207–Pro243 shows a compositional bias: basic residues.

It belongs to the splicing factor SR family. SR subfamily. In terms of assembly, component of the spliceosome.

It localises to the nucleus speckle. Its subcellular location is the nucleus. It is found in the nucleoplasm. Probably involved in intron recognition and spliceosome assembly. The protein is Serine/arginine-rich splicing factor SR34B (SR34B) of Arabidopsis thaliana (Mouse-ear cress).